A 785-amino-acid chain; its full sequence is Ribosome biogenesis protein BOP1 homolog (785 aa).

Residues 1 to 11 (MTKKLTIKRKV) show a composition bias toward basic residues. The interval 1-160 (MTKKLTIKRK…DSDTSDEEDI (160 aa)) is disordered. 3 stretches are compositionally biased toward acidic residues: residues 45–54 (EDSTDDEGID), 61–73 (SSED…DEEG), and 85–102 (SGDD…EDDA). Residues 103 to 112 (DAKKSSKNND) are compositionally biased toward basic and acidic residues. Positions 150–159 (ADSDTSDEED) are enriched in acidic residues. WD repeat units follow at residues 446–487 (GHTD…RTIE), 489–527 (EDVV…KLLV), 571–613 (THFK…SQIP), 616–654 (KSKG…LIKK), 657–696 (TNSK…KPYQ), 700–739 (LHRN…DLLQ), and 755–785 (REEF…RLFT).

The protein belongs to the WD repeat BOP1/ERB1 family.

The protein localises to the nucleus. Its subcellular location is the nucleolus. The protein resides in the nucleoplasm. Functionally, required for maturation of ribosomal RNAs and formation of the large ribosomal subunit. This is Ribosome biogenesis protein BOP1 homolog from Drosophila persimilis (Fruit fly).